The following is a 359-amino-acid chain: MAFNTDEIKTVVESFETTPYEYEWAPPCEKVRIKELGSWLLPPLYSLVFIIGLLGNMMVVLILIKYRKLQIMTNIYLFNLAISDLLFLFTVPFWIHYVLWNEWGFGHYMCKMLSGFYYLALYSEIFFIILLTIDRYLAIVHAVFALRARTVTFATITSIITWGLAGLAALPEFIFHESQDSFGEFSCSPRYPEGEEDSWKRFHALRMNIFGLALPLLIMVICYSGIIKTLLRCPNKKKHKAIRLIFVVMIVFFIFWTPYNLVLLFSAFHSTFLETSCQQSKHLDLAMQVTEVIAYTHCCINPVIYAFVGERFRKHLRLFFHRNVAVYLGKYIPFLPGEKMERTSSVSPSTGEQEISVVF.

At 1–38 (MAFNTDEIKTVVESFETTPYEYEWAPPCEKVRIKELGS) the chain is on the extracellular side. A helical membrane pass occupies residues 39–64 (WLLPPLYSLVFIIGLLGNMMVVLILI). Residues 65 to 68 (KYRK) are Cytoplasmic-facing. The chain crosses the membrane as a helical span at residues 69–95 (LQIMTNIYLFNLAISDLLFLFTVPFWI). Over 96–111 (HYVLWNEWGFGHYMCK) the chain is Extracellular. C110 and C187 are joined by a disulfide. A helical transmembrane segment spans residues 112 to 133 (MLSGFYYLALYSEIFFIILLTI). Residues 134-150 (DRYLAIVHAVFALRART) lie on the Cytoplasmic side of the membrane. The chain crosses the membrane as a helical span at residues 151 to 175 (VTFATITSIITWGLAGLAALPEFIF). At 176 to 201 (HESQDSFGEFSCSPRYPEGEEDSWKR) the chain is on the extracellular side. A helical membrane pass occupies residues 202–227 (FHALRMNIFGLALPLLIMVICYSGII). Topologically, residues 228-243 (KTLLRCPNKKKHKAIR) are cytoplasmic. The helical transmembrane segment at 244-268 (LIFVVMIVFFIFWTPYNLVLLFSAF) threads the bilayer. At 269-285 (HSTFLETSCQQSKHLDL) the chain is on the extracellular side. Residues 286-309 (AMQVTEVIAYTHCCINPVIYAFVG) form a helical membrane-spanning segment. Residues 310–359 (ERFRKHLRLFFHRNVAVYLGKYIPFLPGEKMERTSSVSPSTGEQEISVVF) lie on the Cytoplasmic side of the membrane.

The protein belongs to the G-protein coupled receptor 1 family. Detected in skeletal muscle and in trace amounts in leukocytes.

Its subcellular location is the cell membrane. In terms of biological role, receptor for C-C type chemokine. Binds and responds to a variety of chemokines, including CCL11, CCL26, CCL7, CCL13, RANTES(CCL5) and CCL15. Subsequently transduces a signal by increasing the intracellular calcium ions level. In addition acts as a possible functional receptor for NARS1. In Mus musculus (Mouse), this protein is Probable C-C chemokine receptor type 3 (Ccr3).